Here is a 197-residue protein sequence, read N- to C-terminus: Holliday junction branch migration complex subunit RuvA (197 aa).

The segment at M1–A64 is domain I. Residues T65–A142 form a domain II region. The segment at A143–S153 is flexible linker. Positions S153–K197 are domain III.

The protein belongs to the RuvA family. As to quaternary structure, homotetramer. Forms an RuvA(8)-RuvB(12)-Holliday junction (HJ) complex. HJ DNA is sandwiched between 2 RuvA tetramers; dsDNA enters through RuvA and exits via RuvB. An RuvB hexamer assembles on each DNA strand where it exits the tetramer. Each RuvB hexamer is contacted by two RuvA subunits (via domain III) on 2 adjacent RuvB subunits; this complex drives branch migration. In the full resolvosome a probable DNA-RuvA(4)-RuvB(12)-RuvC(2) complex forms which resolves the HJ.

The protein localises to the cytoplasm. In terms of biological role, the RuvA-RuvB-RuvC complex processes Holliday junction (HJ) DNA during genetic recombination and DNA repair, while the RuvA-RuvB complex plays an important role in the rescue of blocked DNA replication forks via replication fork reversal (RFR). RuvA specifically binds to HJ cruciform DNA, conferring on it an open structure. The RuvB hexamer acts as an ATP-dependent pump, pulling dsDNA into and through the RuvAB complex. HJ branch migration allows RuvC to scan DNA until it finds its consensus sequence, where it cleaves and resolves the cruciform DNA. The protein is Holliday junction branch migration complex subunit RuvA of Nitrosospira multiformis (strain ATCC 25196 / NCIMB 11849 / C 71).